Reading from the N-terminus, the 558-residue chain is Protein shisa-7 (558 aa).

The first 22 residues, 1–22 (MPALLLLGTVALLASAAGPAGA), serve as a signal peptide directing secretion. Residues 23-189 (RPSNDTSSVA…GGEGPGGSTA (167 aa)) are Extracellular-facing. N26 is a glycosylation site (N-linked (GlcNAc...) asparagine). 2 disordered regions span residues 53–79 (GGSAAGTSANATKTSPASGTGAAARAP) and 142–181 (TPPPLAGGAGGAGGAGGGPGPGQAGWLEGGRAGGAGGRGG). Residues 57 to 77 (AGTSANATKTSPASGTGAAAR) are compositionally biased toward low complexity. Over residues 148–181 (GGAGGAGGAGGGPGPGQAGWLEGGRAGGAGGRGG) the composition is skewed to gly residues. The tract at residues 154–175 (GGAGGGPGPGQAGWLEGGRAGG) is GRID. A helical membrane pass occupies residues 190–210 (YVVCGVISFALAVGVGAKVAF). Topologically, residues 211 to 558 (SKASRAPRAH…RTASKNEVTV (348 aa)) are cytoplasmic. A disordered region spans residues 236-263 (QAGPATRPDRARSSSLTPGLGGPDSMAP). S438 is modified (phosphoserine). Residues 443–506 (RQSREHLLSP…HHHHALHGSP (64 aa)) form a disordered region. The segment covering 453–462 (PRSPALPPDP) has biased composition (pro residues). Residues 466-477 (ASLAASHSNLLL) are compositionally biased toward low complexity. T532 carries the phosphothreonine modification. Residues 555–558 (EVTV) carry the PDZ-binding motif.

The protein belongs to the shisa family. In terms of assembly, interacts with GABA(A)R (GABA type A receptor) subunits GABRA1, GABRA2 and GABRG2; the interaction is direct. Does not interact with GABRB2 and GABRB3 subunits. Interacts with AMPAR subunits GRIA1, GRIA2 and GRIA3 and AMPAR auxiliary proteins SHISA6 and SHISA7 in heterologous cells. Interacts (via PDZ-binding motif) with DLG4/PSD-95 (via PDZ domain)in heterologous cells; the interaction is direct. In terms of processing, N-glycosylated. Mainly expressed in neurons. Highly expressed in brain structures including cortex, striatum, olfactory bulb, amygdala hippocampus CA1-3 and dentate gyrus (at protein level).

The protein localises to the postsynaptic density membrane. Functionally, transmembrane protein that regulates gamma-aminobutyric acid type A receptor (GABA(A)R) trafficking, channel deactivation kinetics and pharmacology, necessary for fast inhibitory transmission in the brain. Enhances the action of benzodiazepine, a primary GABA(A)Rs target drug, in the brain. May affect channel kinetics of AMPA-type glutamate receptors (AMPAR), the brain's main excitatory neurotransmitter, necessary for synaptic hippocampal plasticity, and memory recall. May regulate the induction and maintenance of long-term potentiation at Schaffer collaterals/CA3-CA1 excitatory synapses. The protein is Protein shisa-7 of Mus musculus (Mouse).